We begin with the raw amino-acid sequence, 309 residues long: Calcium homeostasis modulator protein 5 (309 aa).

Residues 1 to 15 are Cytoplasmic-facing; it reads MDAFQGILKFFLNQK. A 1,2-diacyl-sn-glycero-3-phosphate-binding residues include Lys15, Arg32, and Val37. The helical transmembrane segment at 16 to 37 threads the bilayer; the sequence is TVIGYSFMALLTVGSERLFSVV. Topologically, residues 38–45 are extracellular; that stretch reads AFKCPCST. Intrachain disulfides connect Cys41–Cys127, Cys43–Cys158, and Cys142–Cys149. A helical membrane pass occupies residues 46–70; sequence ENMTYGLVFLFAPAWVLLILGFFLN. Residues 71-99 are Cytoplasmic-facing; the sequence is NRSWRLFTGCCVNPRKIFPRGHSCRFFYV. Residues 100–129 form a helical membrane-spanning segment; that stretch reads LGQITLSSLVAPVMWLSVALLNGTFYECAM. A 1,2-diacyl-sn-glycero-3-phosphate-binding residues include Gln102 and Asn121. The Extracellular segment spans residues 130–174; sequence SGTRSSGLLELICKGKPKECWEELHKVSCGKTSMLPTVNEELKLS. The chain crosses the membrane as a helical span at residues 175–200; the sequence is LQAQSQILGWCLICSASFFSLLTTCY. The Cytoplasmic segment spans residues 201 to 309; the sequence is ARCRSKVSYL…MVLVGTAHNM (109 aa). Arg202 contributes to the a 1,2-diacyl-sn-glycero-3-phosphate binding site.

Belongs to the CALHM family. In terms of assembly, oligomerizes to form undecameric cone-shaped channels.

It localises to the membrane. Functionally, may assemble to form large pore channels with gating and ion conductance likely regulated by membrane lipids. In Homo sapiens (Human), this protein is Calcium homeostasis modulator protein 5.